A 203-amino-acid chain; its full sequence is Small ribosomal subunit protein uS4 (203 aa).

The S4 RNA-binding domain occupies 93 to 156 (RRLDNVVYRL…MKVPAILEAV (64 aa)).

It belongs to the universal ribosomal protein uS4 family. In terms of assembly, part of the 30S ribosomal subunit. Contacts protein S5. The interaction surface between S4 and S5 is involved in control of translational fidelity.

In terms of biological role, one of the primary rRNA binding proteins, it binds directly to 16S rRNA where it nucleates assembly of the body of the 30S subunit. With S5 and S12 plays an important role in translational accuracy. This Streptococcus uberis (strain ATCC BAA-854 / 0140J) protein is Small ribosomal subunit protein uS4.